The following is a 438-amino-acid chain: GTPase Der (438 aa).

2 EngA-type G domains span residues 4-168 and 176-351; these read PVVA…PAGA and VRIA…GEYR. GTP-binding positions include 10 to 17, 57 to 61, 120 to 123, 182 to 189, 229 to 233, and 294 to 297; these read GRPNVGKS, DTGGI, NKVD, DTAGM, and NKWD. In terms of domain architecture, KH-like spans 352–436; it reads RQIPTSMLNR…PVRILFRRRE (85 aa).

Belongs to the TRAFAC class TrmE-Era-EngA-EngB-Septin-like GTPase superfamily. EngA (Der) GTPase family. As to quaternary structure, associates with the 50S ribosomal subunit.

Functionally, GTPase that plays an essential role in the late steps of ribosome biogenesis. The chain is GTPase Der from Desulforudis audaxviator (strain MP104C).